We begin with the raw amino-acid sequence, 134 residues long: Transcription antitermination protein NusB (134 aa).

It belongs to the NusB family.

In terms of biological role, involved in transcription antitermination. Required for transcription of ribosomal RNA (rRNA) genes. Binds specifically to the boxA antiterminator sequence of the ribosomal RNA (rrn) operons. The polypeptide is Transcription antitermination protein NusB (Shewanella baltica (strain OS223)).